We begin with the raw amino-acid sequence, 2250 residues long: MGIFTLCSCGVPCPTRSFYRRHMASGCDLLPTRQQLADVGYTEPTVIAEVVTPPTQAPLELFVEISPPVLAPFEPSVEISLPIQAPAEPIVEASPPAATQFVGIEALIASGPCFFGSFGPFEEYYSSPVGPLTRFDTLRREGHCAARARVAAVAAKAVIVQQTLSETAAAMRATLPLWMKGQVAPPVKSKRALKREAKAKAKADYLASDEAYYKATDGLTALPPGVSRDVHMRQLDAMEVAYLAHVGDVAARGFQRRQVLRAAYKARCEKRAFKRFLEEVDFLCLPVHIVDKIQTPFDGEQAAAPEMQKGMVYATSRRQVKTRRSFSSFLPKEDFSFTLGVCPARSPTVTPSSTPSTSRSSSPEPRVSSPSGVLPEKAACIGFCSHGSECTEHFCFGYLNLKSEALASQYLAWLLQTKLPGGISCFELEVSSYLEQCQDTMEAIDLWWHAMDRYCFNFKSSKYVILDNFLCKHSIAKDQTPREFLAKHRIAKAKALHRVPSRKEKMQALCEQRADKAWDAYIELNKNCKVGEGPLEYLKAAKDRCVEFFSPFTKYCNEAIRSLNPLVAILGPFKDGFWTCFNNLREKCLKMVNDHWLAFAAGTTLVLSLIFLLCIICLVKIFSILIANLGLGVVAITTLVTALVVGFFLFNGMLEQAADLQLCSLVASDFLNFLAQNQGSALVAGTMASVQDDLRGQGVSWCFSALYKLISRVVPVGIKETSILFNSIGNVSRSANHSKDFFLNMKEMACSWMDALSDAMALISDDSVSAMQVLKHLCEHDFLDWAKKVERYAGETYDSLIISPAERLKILRILADQQESFQKAFYNPRIASKAPRLMLTEFNRLSTLLRDAHNALSRASLFDRQRTPPFWVHLYSENGGTGKSMAMMPLGNHMLDAIGEPKTCRFVTRNVASKFLNGYQHQPCFLMDEFGAAPKQDYSDEVTMLDLVSPNALTLNMAAIGEKNTMFTSKLIISTANRRLAHPDVKLGANLDGFLRRRNILAEVVLVSGKPHFHEFNLLAPRTEQKVYLNRAMQESQVPDPLTPQEFYSLCTENFVNFLNQQSSTVAMSAGLNYVRSSDFSHLKDFLLFKIGLDFEENEVERIVTDYGNSLKNETIFPPEHEQIFQKWKDALDSLTLPELVSLLDKSVSETFVYTLISENHPNVVMSSLTPYECMIYAICKKKYREGTEAKLPFPEGETTSYGASFLSFVAQVALCIPKWALFCVALCAVLLVGYLIIKFAIFLFSGVVTLLGALAFSNLSGDGAEDSPSFDTNRKRGGVKFEYSTKWDASSTNRFAESYSENGTIPAGTSWADFFGEGPEEEPSQSLLNLLKHQVVLIAEPTKVVYNCIALGGRNFLITKHVWDLMPACNYGLYGYAVAKDRIFISPRIRPCAQLKGRDLVIVQLPDSVPPFTSLPRDIFLENMAKAPKTANACLVVAKPLFERRSVAKLEQTIYPFKQLPQVHSKDTYSCGSLGSKQMPACYSYVFETYAGLCTSPLIAQEGGRCIILGLHVVGDRSKMGYAQIVTLDDFSDVALSDKVGQGPEEMYIPTKNSECFGSVTKLGAWTGPKPYFLEKTSLIPSLISTSIDVERTTEPAILSQRDKRLKDSINPEFDVFLEGMKKYAVEAHSLDEDLEVFEDALDRVFLEIPEHACEDLTNDQVCNGIEDDPYAEGIVMQTAEGFPFCTQRPAGASGKSWLFAGAPGDWHIVPGSLLANEMHKKEVAPSRGLFEPLIGIDFPKDEKVDSSKVYIKPKTRLFTILPVDYNILVRKYFLSSVSHIMTQHNTIPVKVGIDCLSNEWSILYHQLRSKGTNWFNGDYSRFDGITPRNVLQGIVKRINKFYNNKNSLAITDSNLSINSDLARSLLTDMASTRYGLTNGDLWYVTSGIPSGFPLTVIVNSLVNNFFIHFSYIKLMKREELNSLYPLHSFRQMVAYATYGDDNLVSVNDVITEKFNLVKIADLLAEHGVTLKNGADKNEEILSPFYPLEKVDFLKRKFVHYQGHVVAPLNPVNITERLHWIRKGLGEADATLENCSSAAFEALFHGRCYYDTLVAKIYKACAASKLSIQLPTYNDALAIFLSNDSFAKAIQTISLDLPKAIFVNKSNYFVSEIFPDVFFCSNERNVTLHKLLEITTTRNICYISRNYESRNSSRGLFSLKGEGWALAPVSARLVVYKNMQKPVYFVDEANDGLALAYCLDYMLRIKGVSRSRLAQVLYNIFGHDETLCSRIASNFSLLDSNKYMPPHKK.

Residues 346 to 371 are compositionally biased toward low complexity; sequence SPTVTPSSTPSTSRSSSPEPRVSSPS. The interval 346–372 is disordered; it reads SPTVTPSSTPSTSRSSSPEPRVSSPSG. The region spanning 849-1020 is the SF3 helicase domain; the sequence is LRDAHNALSR…PHFHEFNLLA (172 aa). Residues 1225-1245 traverse the membrane as a helical segment; sequence VALCAVLLVGYLIIKFAIFLF. Ser1299 carries the O-(5'-phospho-RNA)-serine modification. Positions 1319-1532 constitute a Peptidase C3 domain; it reads GPEEEPSQSL…YAQIVTLDDF (214 aa). Catalysis depends on for picornain 3C-like protease activity residues His1362, Asp1400, and Cys1495. The 143-residue stretch at 1814–1956 folds into the RdRp catalytic domain; sequence TNWFNGDYSR…SVNDVITEKF (143 aa).

The protein belongs to the comoviridae genome polyprotein B family. In terms of processing, specific enzymatic cleavages by picornain 3C-like protease in vivo yield mature proteins. Picornain 3C-like protease is autocatalytically processed. Post-translationally, viral genome-linked protein (VPg) is uridylylated by the polymerase and is covalently linked to the 5'-end of genomic RNA. This uridylylated form acts as a nucleotide-peptide primer for the polymerase.

The protein localises to the host membrane. The catalysed reaction is RNA(n) + a ribonucleoside 5'-triphosphate = RNA(n+1) + diphosphate. Picornain 3C-like protease is a thiol protease that probably cleaves the B and M polyproteins. Functionally, viral genome-linked protein (VPg) plays a role in RNA replication. The chain is RNA1 polyprotein from Balsamorhiza sagittata (Apple).